A 240-amino-acid polypeptide reads, in one-letter code: Gene 88 protein (240 aa).

This is Gene 88 protein (88) from Mycobacterium phage D29 (Mycobacteriophage D29).